Consider the following 323-residue polypeptide: ADP-L-glycero-D-manno-heptose-6-epimerase (323 aa).

NADP(+) is bound by residues 10–11 (FI), 31–32 (DN), lysine 38, arginine 53, 75–79 (MGACS), and asparagine 92. The Proton acceptor role is filled by tyrosine 143. Lysine 147 is a binding site for NADP(+). Substrate is bound at residue asparagine 170. NADP(+)-binding residues include valine 171 and lysine 179. Lysine 179 functions as the Proton acceptor in the catalytic mechanism. Substrate is bound by residues aspartate 181, lysine 188, 202 to 205 (FRSC), arginine 216, and tyrosine 281.

This sequence belongs to the NAD(P)-dependent epimerase/dehydratase family. HldD subfamily. In terms of assembly, homopentamer. NADP(+) is required as a cofactor.

It catalyses the reaction ADP-D-glycero-beta-D-manno-heptose = ADP-L-glycero-beta-D-manno-heptose. The protein operates within nucleotide-sugar biosynthesis; ADP-L-glycero-beta-D-manno-heptose biosynthesis; ADP-L-glycero-beta-D-manno-heptose from D-glycero-beta-D-manno-heptose 7-phosphate: step 4/4. Functionally, catalyzes the interconversion between ADP-D-glycero-beta-D-manno-heptose and ADP-L-glycero-beta-D-manno-heptose via an epimerization at carbon 6 of the heptose. This is ADP-L-glycero-D-manno-heptose-6-epimerase from Nitratidesulfovibrio vulgaris (strain DP4) (Desulfovibrio vulgaris).